The primary structure comprises 96 residues: uncharacterized protein (96 aa).

Residues 1–21 (MLASVLILGAIAVGSAIPTIA) form the signal peptide.

This is an uncharacterized protein from Archaeoglobus fulgidus (strain ATCC 49558 / DSM 4304 / JCM 9628 / NBRC 100126 / VC-16).